The chain runs to 129 residues: Fluoride-specific ion channel FluC 1 (129 aa).

3 consecutive transmembrane segments (helical) span residues 43–63 (ASLLLGLVAGAAGAGAPPAWV), 68–88 (VVSLVGTGLCGALSTYSTFSY), and 100–120 (LLAAANVAGSVLAAFGAAALG). The Na(+) site is built by Gly-78 and Ser-81.

Belongs to the fluoride channel Fluc/FEX (TC 1.A.43) family.

The protein resides in the cell membrane. It catalyses the reaction fluoride(in) = fluoride(out). With respect to regulation, na(+) is not transported, but it plays an essential structural role and its presence is essential for fluoride channel function. Functionally, fluoride-specific ion channel. Important for reducing fluoride concentration in the cell, thus reducing its toxicity. The polypeptide is Fluoride-specific ion channel FluC 1 (Frankia casuarinae (strain DSM 45818 / CECT 9043 / HFP020203 / CcI3)).